Reading from the N-terminus, the 278-residue chain is Large ribosomal subunit protein uL2 (278 aa).

Disordered regions lie at residues 1–20 (MGIRKYKPTTPGRRGASVSD), 25–58 (TRSTPEKSLVRPLHGKGGRNAHGRITTRHKGGGH), and 223–278 (GVVM…GKKR). Over residues 37-58 (LHGKGGRNAHGRITTRHKGGGH) the composition is skewed to basic residues. Basic and acidic residues predominate over residues 253 to 268 (PEGRTRKPNKPSDKLI). Residues 269-278 (VRRRRTGKKR) are compositionally biased toward basic residues.

Belongs to the universal ribosomal protein uL2 family. As to quaternary structure, part of the 50S ribosomal subunit. Forms a bridge to the 30S subunit in the 70S ribosome.

Functionally, one of the primary rRNA binding proteins. Required for association of the 30S and 50S subunits to form the 70S ribosome, for tRNA binding and peptide bond formation. It has been suggested to have peptidyltransferase activity; this is somewhat controversial. Makes several contacts with the 16S rRNA in the 70S ribosome. The sequence is that of Large ribosomal subunit protein uL2 from Mycolicibacterium smegmatis (strain ATCC 700084 / mc(2)155) (Mycobacterium smegmatis).